A 318-amino-acid chain; its full sequence is NADH-ubiquinone oxidoreductase chain 1 (318 aa).

The next 8 helical transmembrane spans lie at Met3–Ile23, Met70–Pro90, Leu100–Gly120, Leu146–Ile166, His171–Ala191, Leu222–Phe242, Glu253–Ile273, and Leu294–Ile314.

The protein belongs to the complex I subunit 1 family.

It is found in the mitochondrion inner membrane. It carries out the reaction a ubiquinone + NADH + 5 H(+)(in) = a ubiquinol + NAD(+) + 4 H(+)(out). Functionally, core subunit of the mitochondrial membrane respiratory chain NADH dehydrogenase (Complex I) that is believed to belong to the minimal assembly required for catalysis. Complex I functions in the transfer of electrons from NADH to the respiratory chain. The immediate electron acceptor for the enzyme is believed to be ubiquinone. The chain is NADH-ubiquinone oxidoreductase chain 1 (MT-ND1) from Pteropus vampyrus (Large flying fox).